The following is a 231-amino-acid chain: Probable intron-encoded endonuclease 1 (231 aa).

This sequence belongs to the LAGLIDADG endonuclease family.

It is found in the mitochondrion. In terms of biological role, endonuclease involved in mitochondrial 21S rRNA gene intron homing. This chain is Probable intron-encoded endonuclease 1, found in Wickerhamomyces canadensis (Yeast).